Reading from the N-terminus, the 330-residue chain is Lipoyl synthase (330 aa).

7 residues coordinate [4Fe-4S] cluster: cysteine 55, cysteine 60, cysteine 66, cysteine 81, cysteine 85, cysteine 88, and serine 292. The Radical SAM core domain occupies 67–281 (WEDREATFLI…AEEAREIGFV (215 aa)).

This sequence belongs to the radical SAM superfamily. Lipoyl synthase family. It depends on [4Fe-4S] cluster as a cofactor.

It localises to the cytoplasm. The catalysed reaction is [[Fe-S] cluster scaffold protein carrying a second [4Fe-4S](2+) cluster] + N(6)-octanoyl-L-lysyl-[protein] + 2 oxidized [2Fe-2S]-[ferredoxin] + 2 S-adenosyl-L-methionine + 4 H(+) = [[Fe-S] cluster scaffold protein] + N(6)-[(R)-dihydrolipoyl]-L-lysyl-[protein] + 4 Fe(3+) + 2 hydrogen sulfide + 2 5'-deoxyadenosine + 2 L-methionine + 2 reduced [2Fe-2S]-[ferredoxin]. It functions in the pathway protein modification; protein lipoylation via endogenous pathway; protein N(6)-(lipoyl)lysine from octanoyl-[acyl-carrier-protein]: step 2/2. Catalyzes the radical-mediated insertion of two sulfur atoms into the C-6 and C-8 positions of the octanoyl moiety bound to the lipoyl domains of lipoate-dependent enzymes, thereby converting the octanoylated domains into lipoylated derivatives. In Cutibacterium acnes (strain DSM 16379 / KPA171202) (Propionibacterium acnes), this protein is Lipoyl synthase.